We begin with the raw amino-acid sequence, 948 residues long: Coatomer subunit beta-1 (948 aa).

HEAT repeat units lie at residues 49 to 87, 92 to 126, 127 to 164, 274 to 311, 312 to 349, and 391 to 428; these read ETIPQLFITIIRYVLPSEDHTIQKLLLLYLELIEKTDSK, PEMILICQNLRNNLQHPNEYIRGVTLRFLCRMKET, EIVEPLTPSVLQNLEHRHPFVRRNAILAIMSIYKLPQG, TAIRAAANTYCQLLLSQSDNNVKLILLDRLYELKTLHR, DIMVELIIDVLRALSSPNLDIRRKTLDISLDLITHHNI, and EVASTVVHLLMDFLGDSNVASALDVVVFVREIIETNPK.

In terms of assembly, oligomeric complex that consists of at least the alpha, beta, beta', gamma, delta, epsilon and zeta subunits.

Its subcellular location is the cytoplasm. The protein resides in the golgi apparatus membrane. The protein localises to the cytoplasmic vesicle. It is found in the COPI-coated vesicle membrane. Functionally, the coatomer is a cytosolic protein complex that binds to dilysine motifs and reversibly associates with Golgi non-clathrin-coated vesicles, which further mediate biosynthetic protein transport from the ER, via the Golgi up to the trans Golgi network. Coatomer complex is required for budding from Golgi membranes, and is essential for the retrograde Golgi-to-ER transport of dilysine-tagged proteins. This chain is Coatomer subunit beta-1, found in Arabidopsis thaliana (Mouse-ear cress).